The sequence spans 300 residues: Delta-9 desaturase-like 4 protein (300 aa).

2 helical membrane-spanning segments follow: residues 39–59 and 61–81; these read VVVI…WEAL and FGLV…HRNL. Residues 78–83 carry the Histidine box-1 motif; it reads HRNLSH. Residues 115-119 carry the Histidine box-2 motif; sequence HRFHH. 2 helical membrane passes run 175-195 and 200-220; these read IAVH…LPYL and GVGI…CHIW. The Histidine box-3 motif lies at 247–251; that stretch reads HNNHH.

It belongs to the fatty acid desaturase type 1 family. Fe cation serves as cofactor.

Its subcellular location is the endoplasmic reticulum membrane. Its pathway is lipid metabolism; polyunsaturated fatty acid biosynthesis. The chain is Delta-9 desaturase-like 4 protein from Arabidopsis thaliana (Mouse-ear cress).